The primary structure comprises 101 residues: A-type ATP synthase subunit F (101 aa).

The protein belongs to the V-ATPase F subunit family. Has multiple subunits, A(3), B(3), C, D, E, F, G, I and K(x); there may be a few other subunits as well.

It is found in the cell membrane. Functionally, component of the A-type ATP synthase that produces ATP from ADP in the presence of a proton gradient across the membrane. The sequence is that of A-type ATP synthase subunit F from Methanosarcina mazei (strain ATCC BAA-159 / DSM 3647 / Goe1 / Go1 / JCM 11833 / OCM 88) (Methanosarcina frisia).